Consider the following 831-residue polypeptide: Thymine dioxygenase JBP1-B (831 aa).

The thymine dioxygenase stretch occupies residues 80-282 (VVGGVLLPGA…RLTCVCYYRA (203 aa)). 3 residues coordinate Fe cation: histidine 207, aspartate 209, and histidine 257. Position 273 (arginine 273) interacts with 2-oxoglutarate. Residues 409-578 (LGGALKAAEE…IEEARRRGNA (170 aa)) form a DNA-binding JBP1 domain region.

The protein belongs to the TET family. JBP1 subfamily. As to quaternary structure, monomer. Binds to DNA as a monomer. Fe(2+) is required as a cofactor.

The protein localises to the nucleus. It carries out the reaction thymine + 2-oxoglutarate + O2 = 5-hydroxymethyluracil + succinate + CO2. Its function is as follows. Dioxygenase that catalyzes the first step of DNA base J (beta-d-glucosyl-HOMedU) biosynthesis by converting thymine to 5-hydroxymethyluracil (HOMedU). DNA base J is a hypermodified thymidine residue found in the genome of kinetoplastid parasites, which is localized primarily to repetitive DNA, namely the telomeres, and is implicated in the regulation of antigenic variation. Also specifically binds to base J-containing DNA (J-DNA). Involved in propagation and maintenance of DNA base J synthesis initiated by JBP2 by specifically binding already synthesized DNA base J and propagating J synthesis. Thymine dioxygenase activity and J-DNA-binding are independent functions. This is Thymine dioxygenase JBP1-B (JBP1B) from Trypanosoma cruzi (strain CL Brener).